The sequence spans 452 residues: Phosphoglucosamine mutase (452 aa).

S98 (phosphoserine intermediate) is an active-site residue. Positions 98, 239, 241, and 243 each coordinate Mg(2+). Residue S98 is modified to Phosphoserine.

Belongs to the phosphohexose mutase family. Requires Mg(2+) as cofactor. Post-translationally, activated by phosphorylation.

The catalysed reaction is alpha-D-glucosamine 1-phosphate = D-glucosamine 6-phosphate. In terms of biological role, catalyzes the conversion of glucosamine-6-phosphate to glucosamine-1-phosphate. In Anaplasma marginale (strain St. Maries), this protein is Phosphoglucosamine mutase.